Consider the following 173-residue polypeptide: Crossover junction endodeoxyribonuclease RuvC (173 aa).

Active-site residues include Asp8, Glu67, and Asp139. The Mg(2+) site is built by Asp8, Glu67, and Asp139.

The protein belongs to the RuvC family. In terms of assembly, homodimer which binds Holliday junction (HJ) DNA. The HJ becomes 2-fold symmetrical on binding to RuvC with unstacked arms; it has a different conformation from HJ DNA in complex with RuvA. In the full resolvosome a probable DNA-RuvA(4)-RuvB(12)-RuvC(2) complex forms which resolves the HJ. The cofactor is Mg(2+).

The protein localises to the cytoplasm. The enzyme catalyses Endonucleolytic cleavage at a junction such as a reciprocal single-stranded crossover between two homologous DNA duplexes (Holliday junction).. Functionally, the RuvA-RuvB-RuvC complex processes Holliday junction (HJ) DNA during genetic recombination and DNA repair. Endonuclease that resolves HJ intermediates. Cleaves cruciform DNA by making single-stranded nicks across the HJ at symmetrical positions within the homologous arms, yielding a 5'-phosphate and a 3'-hydroxyl group; requires a central core of homology in the junction. The consensus cleavage sequence is 5'-(A/T)TT(C/G)-3'. Cleavage occurs on the 3'-side of the TT dinucleotide at the point of strand exchange. HJ branch migration catalyzed by RuvA-RuvB allows RuvC to scan DNA until it finds its consensus sequence, where it cleaves and resolves the cruciform DNA. The chain is Crossover junction endodeoxyribonuclease RuvC from Tolumonas auensis (strain DSM 9187 / NBRC 110442 / TA 4).